The chain runs to 500 residues: Ephrin type-B receptor 3 (500 aa).

A Fibronectin type-III domain is found at 1 to 64 (PLLVLDLIIQ…NPVDFSTSLY (64 aa)). At 1 to 113 (PLLVLDLIIQ…ERSVQDLLPL (113 aa)) the chain is on the extracellular side. The disordered stretch occupies residues 76–103 (HLRRREELTTTTTGLKSREERFQKSDDP). Over residues 91–103 (KSREERFQKSDDP) the composition is skewed to basic and acidic residues. Residues 114 to 134 (IVGSASAGFVVILAMIVIAVV) form a helical membrane-spanning segment. The Cytoplasmic portion of the chain corresponds to 135–500 (CLRRQRTGSE…QMSQTLPIRV (366 aa)). Tyrosine 168 bears the Phosphotyrosine; by autocatalysis mark. Residues 187–450 (VKIEEVIGAG…QIVSTLDKFL (264 aa)) enclose the Protein kinase domain. Residues 193-201 (IGAGEFGEV) and lysine 219 contribute to the ATP site. Catalysis depends on aspartate 312, which acts as the Proton acceptor. Residues 421-500 (LHQLMLECWV…QMSQTLPIRV (80 aa)) enclose the SAM domain. The PDZ-binding signature appears at 498-500 (IRV).

It belongs to the protein kinase superfamily. Tyr protein kinase family. Ephrin receptor subfamily. As to quaternary structure, heterotetramer upon binding of the ligand. The heterotetramer is composed of an ephrin dimer and a receptor dimer. Oligomerization is probably required to induce biological responses. In terms of processing, phosphorylated. Autophosphorylates upon ligand-binding. Autophosphorylation on Tyr-168 is required for interaction with SH2 domain-containing proteins. As to expression, widely expressed in the developing nervous system.

The protein localises to the cell membrane. The protein resides in the cell projection. It is found in the dendrite. It carries out the reaction L-tyrosyl-[protein] + ATP = O-phospho-L-tyrosyl-[protein] + ADP + H(+). Functionally, receptor tyrosine kinase which binds promiscuously transmembrane ephrin-B family ligands residing on adjacent cells, leading to contact-dependent bidirectional signaling into neighboring cells. The signaling pathway downstream of the receptor is referred to as forward signaling while the signaling pathway downstream of the ephrin ligand is referred to as reverse signaling. Generally has an overlapping and redundant function with EPHB2. Like EPHB2, functions in axon guidance during development. In addition to its role in axon guidance also plays an important redundant role with other ephrin-B receptors in development and maturation of dendritic spines and the formation of excitatory synapses. May control other aspects of development through regulation of cell migration and positioning. May play a role in early pattern formation within the developing nervous system. The protein is Ephrin type-B receptor 3 (ephb3) of Danio rerio (Zebrafish).